The sequence spans 379 residues: MPSTIALEKEDHQRDAEFKKVMHGDSAKAAGGVAALLKKNTEAQQIAVDEYFKHFDNKTAEAETQADREARTKEYATLTRHYYNLATDIYEYGWGQCFHFCRYSPGESFYQAIARHEHYLAAQIGIKKDMKVLDVGCGVGGPAREIAKFTDAHITGLNNNDYQIDRATHYAVRDGLSGQLKFVKGDFMQMSFPDNSFDAVYAIEATVHAPKLEGVYGEIYRVLKPGGTFGVYEWLMTDNYDNDNVEHRDIRLAIEVGNGISNMVTISEGLAAMKNVGFELVHHEDLADRNDPMPWYWPIAGELRYMQSYLDFFTVVRMTHTARRILHGFAGILETVGLAPKGTKKTADALARGADGLVAGAKKKLFTPMYLMVGKKPLN.

It belongs to the class I-like SAM-binding methyltransferase superfamily. Erg6/SMT family.

The enzyme catalyses lanosterol + S-adenosyl-L-methionine = eburicol + S-adenosyl-L-homocysteine + H(+). It participates in steroid metabolism; ergosterol biosynthesis. Functionally, catalyzes the methyl transfer from S-adenosyl-methionine to the C-24 of lanosterol to form eburicol. The sequence is that of Sterol 24-C-methyltransferase erg-4 from Neurospora crassa (strain ATCC 24698 / 74-OR23-1A / CBS 708.71 / DSM 1257 / FGSC 987).